The sequence spans 655 residues: D-xylonate dehydratase YjhG (655 aa).

This sequence belongs to the IlvD/Edd family.

It carries out the reaction D-xylonate = 2-dehydro-3-deoxy-D-arabinonate + H2O. With respect to regulation, activity is increased in the presence of Mn(+) and Mg(2+). Inhibited by thiol compounds. Functionally, catalyzes the dehydration of D-xylonic acid to form 2-dehydro-3-deoxy-D-pentonate. This Escherichia coli (strain K12) protein is D-xylonate dehydratase YjhG (yjhG).